Reading from the N-terminus, the 30-residue chain is Beta/omega-theraphotoxin-Tp2a (30 aa).

3 cysteine pairs are disulfide-bonded: cysteine 2-cysteine 16, cysteine 9-cysteine 21, and cysteine 15-cysteine 25. Residues lysine 26 to tryptophan 30 are flexible tail region important for ability to inhibit Nav channel. Residues leucine 29–tryptophan 30 form a hydrophobic dyad that anchors the toxin into the membrane while positioning it over the S3 helix of Nav1.7/SCN9A region.

The protein belongs to the neurotoxin 30 (phrixotoxin) family. In terms of tissue distribution, expressed by the venom gland.

It is found in the secreted. Its function is as follows. Gating-modifier toxin that targets voltage-gated sodium channels with a selective activity on Nav1.7/SCN9A (IC(50)=1-1.5 nM). It inhibits both activation and inactivation. For inhibition of activation, it is 100-fold more selective for Nav1.7/SCN9A (IC(50)=0.26-3) than for other sodium channels (Nav1.2/SCN2A (IC(50)=40-540 nM), Nav1.3/SCN3A (IC(50)=102 nM), Nav1.4/SCN4A (IC(50)=30-39 nM), Nav1.5/SCN5A (IC(50)=19-90 nM), Nav1.6/SCN8A (IC(50)=26 nM), and Nav1.8/SCN10A (IC(50)=146 nM)). For inhibition of inactivation, it is 20-fold more potent in inhibiting inactivation on Nav1.7/SCN9A (IC(50)=250 nM) than other channels (about 4.6 uM for all channels). It also weakly inhibits Cav1.2/CACNA1C and Cav3.2/CACNA1H (29% block at 1 uM). It inhibits Nav1.7/SCN9A activation by interacting with DII and impairs Nav1.7/SCN9A inactivation by interacting with DIV. It docks on top of the DII S3 helix Nav1.7/SCN9A. It is about 60-fold less active on Nav1.7/SCN9A at depolarized potential (0 mV; IC(50)=15 nM), compared to -120 mV potential (IC(50)=0.26 nM). This toxin binds to lipid membrane. This ability correlates with hNav1.7/SCN9A inhibition, showing that membrane binding is the first step in the inhibitory mechanism of this toxin. It inhibits Nav1.2/SCN2A less potently when it is coexpressed with SCN2B or SCN4B than when it is expressed alone, showing that beta subunits (SCN2B and SCN4B) have a protective effect. The protein is Beta/omega-theraphotoxin-Tp2a of Thrixopelma pruriens (Peruvian green velvet tarantula).